Consider the following 520-residue polypeptide: Fusaridione A cluster transcription factor fsdR (520 aa).

The disordered stretch occupies residues 1–30 (MSTGPPSGISLVSMTTPRKSGQHTPESWSK).

It is found in the nucleus. Functionally, transcription factor that regulates the expression of the gene cluster that mediates the biosynthesis of fusaridione A. The polypeptide is Fusaridione A cluster transcription factor fsdR (Fusarium heterosporum).